The primary structure comprises 78 residues: Large ribosomal subunit protein bL31 (78 aa).

Zn(2+) contacts are provided by Cys16, Cys18, Cys38, and Cys41.

The protein belongs to the bacterial ribosomal protein bL31 family. Type A subfamily. In terms of assembly, part of the 50S ribosomal subunit. The cofactor is Zn(2+).

Binds the 23S rRNA. This chain is Large ribosomal subunit protein bL31, found in Frankia casuarinae (strain DSM 45818 / CECT 9043 / HFP020203 / CcI3).